The chain runs to 153 residues: Hydrogenase expression/formation protein HoxT (153 aa).

The protein belongs to the HupJ family.

The protein is Hydrogenase expression/formation protein HoxT (hoxT) of Azotobacter vinelandii.